Consider the following 444-residue polypeptide: Transmembrane protein with metallophosphoesterase domain (444 aa).

The next 5 helical transmembrane spans lie at leucine 7–serine 27, leucine 43–isoleucine 63, methionine 87–valine 107, phenylalanine 114–valine 134, and leucine 162–leucine 182. Residues aspartate 214, histidine 216, aspartate 246, asparagine 277, histidine 382, and histidine 384 each coordinate a divalent metal cation.

Belongs to the metallophosphoesterase superfamily. LOC643853 family. It depends on a divalent metal cation as a cofactor.

It is found in the membrane. The sequence is that of Transmembrane protein with metallophosphoesterase domain (TMPPE) from Bos taurus (Bovine).